Consider the following 445-residue polypeptide: UDP-glucuronic acid decarboxylase 2 (445 aa).

At Ala-2 the chain carries N-acetylalanine. Over Ala-2–Arg-43 the chain is Cytoplasmic. The helical; Signal-anchor for type II membrane protein transmembrane segment at Leu-44–Ser-64 threads the bilayer. Residues Thr-65–Ala-445 lie on the Lumenal side of the membrane. Asp-149–Asp-174 contacts NAD(+). Residue Arg-258 coordinates substrate. The Proton acceptor role is filled by Tyr-261. Residue Tyr-261–Lys-265 participates in NAD(+) binding. Asn-290 contributes to the substrate binding site. Arg-302 serves as a coordination point for NAD(+). Substrate contacts are provided by residues Val-303 to Phe-307, Tyr-320 to Arg-327, and Asp-387 to Arg-391.

Belongs to the NAD(P)-dependent epimerase/dehydratase family. UDP-glucuronic acid decarboxylase subfamily. As to quaternary structure, homodimer. NAD(+) serves as cofactor. In terms of tissue distribution, ubiquitous.

It is found in the golgi apparatus. The protein localises to the golgi stack membrane. It carries out the reaction UDP-alpha-D-glucuronate + H(+) = UDP-alpha-D-xylose + CO2. The protein operates within nucleotide-sugar biosynthesis; UDP-alpha-D-xylose biosynthesis; UDP-alpha-D-xylose from UDP-alpha-D-glucuronate: step 1/1. Its function is as follows. Catalyzes the NAD-dependent decarboxylation of UDP-glucuronic acid to UDP-xylose. Necessary for the biosynthesis of the core tetrasaccharide in glycosaminoglycan biosynthesis. The polypeptide is UDP-glucuronic acid decarboxylase 2 (UXS2) (Arabidopsis thaliana (Mouse-ear cress)).